Consider the following 208-residue polypeptide: Molybdenum cofactor guanylyltransferase (208 aa).

GTP-binding positions include 10-12 (LAG), K23, D69, and D103. D103 is a binding site for Mg(2+).

It belongs to the MobA family. Monomer. Requires Mg(2+) as cofactor.

The protein resides in the cytoplasm. The catalysed reaction is Mo-molybdopterin + GTP + H(+) = Mo-molybdopterin guanine dinucleotide + diphosphate. Transfers a GMP moiety from GTP to Mo-molybdopterin (Mo-MPT) cofactor (Moco or molybdenum cofactor) to form Mo-molybdopterin guanine dinucleotide (Mo-MGD) cofactor. This is Molybdenum cofactor guanylyltransferase from Mesorhizobium japonicum (strain LMG 29417 / CECT 9101 / MAFF 303099) (Mesorhizobium loti (strain MAFF 303099)).